The sequence spans 293 residues: SAGA-associated factor 29 (293 aa).

Residues 3–86 (LVSADSRIAE…LRKALDKIAE (84 aa)) are a coiled coil. Positions 152–293 (GDYVAKPGDK…VVACKEPKKK (142 aa)) constitute an SGF29 C-terminal domain. Histone H3K4me3 N-terminus binding regions lie at residues 194–196 (DID) and 240–243 (QTTC). Residues 264–266 (FED) form a histone H3K4me3 binding region. N6-acetyllysine is present on lysine 288.

It belongs to the SGF29 family. In terms of assembly, interacts with dimethylated and trimethylated 'Lys-4' of histone H3 (H3K4me2 and H3K4me3), with a preference for the trimethylated form (H3K4me3). Component of some SAGA-type complexes. Component of the ADA2A-containing complex (ATAC), composed of KAT14, KAT2A, TADA2L, TADA3L, ZZ3, MBIP, WDR5, YEATS2, CCDC101 and DR1. Interacts with (methylated) CGAS. Interacts with TADA3L, GCN5L2, SUPT3H and MYC.

It is found in the nucleus. Chromatin reader component of some histone acetyltransferase (HAT) SAGA-type complexes like the TFTC-HAT, ATAC or STAGA complexes. SGF29 specifically recognizes and binds methylated 'Lys-4' of histone H3 (H3K4me), with a preference for trimethylated form (H3K4me3). In the SAGA-type complexes, SGF29 is required to recruit complexes to H3K4me. Involved in the response to endoplasmic reticulum (ER) stress by recruiting the SAGA complex to H3K4me, thereby promoting histone H3 acetylation and cell survival. Also binds non-histone proteins that are methylated on Lys residues: specifically recognizes and binds CGAS monomethylated on 'Lys-491'. The chain is SAGA-associated factor 29 from Mus musculus (Mouse).